A 908-amino-acid polypeptide reads, in one-letter code: Magnesium-transporting ATPase, P-type 1 (908 aa).

Residues 1–20 show a composition bias toward basic and acidic residues; sequence MTDMNIENRKLNRPASENDK. Residues 1-21 are disordered; it reads MTDMNIENRKLNRPASENDKQ. Topologically, residues 1–80 are cytoplasmic; it reads MTDMNIENRK…QVPPALIQLL (80 aa). The chain crosses the membrane as a helical span at residues 81–101; sequence QAFNNPFIYVLMALAGVSFIT. The Extracellular portion of the chain corresponds to 102–113; the sequence is DYWLPLRRGEET. Residues 114 to 134 form a helical membrane-spanning segment; it reads DLTGVLIILTMVSLSGLLRFW. The Cytoplasmic portion of the chain corresponds to 135 to 293; the sequence is QEFRTNRAAQ…QTAFDRGVNS (159 aa). The helical transmembrane segment at 294–314 threads the bilayer; it reads VSWLLIRFMLIMVPVVLLING. The Extracellular segment spans residues 315–323; it reads FSKGDWVEA. A helical membrane pass occupies residues 324–341; that stretch reads SLFALAVAVGLTPEMLPM. Glu337 lines the Mg(2+) pocket. The Cytoplasmic segment spans residues 342-704; sequence IVSSNLAKGA…IKGRETFGNI (363 aa). The active-site 4-aspartylphosphate intermediate is the Asp379. Residues Asp650, Asp654, and Asn718 each contribute to the Mg(2+) site. The chain crosses the membrane as a helical span at residues 705-724; that stretch reads IKYLNMTASSNFGNVFSVLV. The Extracellular segment spans residues 725-733; the sequence is ASAFIPFLP. Residues 734–753 form a helical membrane-spanning segment; sequence MLAIHLLIQNLMYDISQLSL. 2 residues coordinate Mg(2+): Asn743 and Asp747. Over 754 to 775 the chain is Cytoplasmic; the sequence is PWDKMDKEFLRKPRKWDAKNIG. A helical membrane pass occupies residues 776-799; it reads RFMLWIGPTSSIFDITTFALMWYV. Topologically, residues 800 to 808 are extracellular; that stretch reads FAANNVEAQ. Residues 809–827 form a helical membrane-spanning segment; sequence ALFQSGWFIEGLLSQTLVV. Over 828–840 the chain is Cytoplasmic; sequence HMLRTQKIPFIQS. A helical membrane pass occupies residues 841–860; that stretch reads RATLPVLLTTGLIMAIGIYI. At 861 to 875 the chain is on the extracellular side; that stretch reads PFSPLGAMVGLEPLP. A helical transmembrane segment spans residues 876–895; it reads LSYFPWLVATLLSYCLVAQG. Residues 896-908 lie on the Cytoplasmic side of the membrane; that stretch reads MKRFYIKRFGQWF.

Belongs to the cation transport ATPase (P-type) (TC 3.A.3) family. Type IIIB subfamily.

The protein localises to the cell inner membrane. The enzyme catalyses Mg(2+)(out) + ATP + H2O = Mg(2+)(in) + ADP + phosphate + H(+). Mediates magnesium influx to the cytosol. The protein is Magnesium-transporting ATPase, P-type 1 (mgtB) of Salmonella typhimurium (strain LT2 / SGSC1412 / ATCC 700720).